A 138-amino-acid polypeptide reads, in one-letter code: MDQTLSDFGAVFVFLLLGTVFVVGGYLTARLLRPSRPNPEKLAVYECGEDAVGTSWVKFNIRFYVVALIFIIFDVEVVFLFPWATVFKQLGEFALIEALVFAGILIIGLAYAWVKGDLDWVRPTPNIPSMPQPPQKEK.

Transmembrane regions (helical) follow at residues 8–28, 63–83, and 93–113; these read FGAVFVFLLLGTVFVVGGYLT, FYVVALIFIIFDVEVVFLFPW, and FALIEALVFAGILIIGLAYAW.

It belongs to the complex I subunit 3 family. NDH-1 is composed of 14 different subunits. Subunits NuoA, H, J, K, L, M, N constitute the membrane sector of the complex.

The protein localises to the cell inner membrane. It carries out the reaction a quinone + NADH + 5 H(+)(in) = a quinol + NAD(+) + 4 H(+)(out). Functionally, NDH-1 shuttles electrons from NADH, via FMN and iron-sulfur (Fe-S) centers, to quinones in the respiratory chain. The immediate electron acceptor for the enzyme in this species is believed to be a menaquinone. Couples the redox reaction to proton translocation (for every two electrons transferred, four hydrogen ions are translocated across the cytoplasmic membrane), and thus conserves the redox energy in a proton gradient. The polypeptide is NADH-quinone oxidoreductase subunit A (Prosthecochloris aestuarii (strain DSM 271 / SK 413)).